Reading from the N-terminus, the 239-residue chain is Ribonuclease 3 (239 aa).

Residues 18 to 141 enclose the RNase III domain; that stretch reads YTTLEKALGY…LMAGVYLEAG (124 aa). Glu54 contributes to the Mg(2+) binding site. The active site involves Asp58. Mg(2+) is bound by residues Ser127 and Glu130. Residue Glu130 is part of the active site. The DRBM domain maps to 168-237; sequence DYKTALQELT…AYYALQKLKE (70 aa).

Belongs to the ribonuclease III family. Homodimer. Mg(2+) is required as a cofactor.

Its subcellular location is the cytoplasm. It carries out the reaction Endonucleolytic cleavage to 5'-phosphomonoester.. Its function is as follows. Digests double-stranded RNA. Involved in the processing of primary rRNA transcript to yield the immediate precursors to the large and small rRNAs (23S and 16S). Processes some mRNAs, and tRNAs when they are encoded in the rRNA operon. Processes pre-crRNA and tracrRNA of type II CRISPR loci if present in the organism. This is Ribonuclease 3 from Helicobacter pylori (strain G27).